We begin with the raw amino-acid sequence, 219 residues long: Large ribosomal subunit protein bL31m (219 aa).

2 stretches are compositionally biased toward basic and acidic residues: residues 169 to 181 (KKEEEEAAKKAAE) and 210 to 219 (KETRHYGKKK). Disordered stretches follow at residues 169–188 (KKEEEEAAKKAAEAEEADPF) and 200–219 (TENMNPGLNFKETRHYGKKK).

This sequence belongs to the bacterial ribosomal protein bL31 family. Highly divergent. Component of the mitochondrial large ribosomal subunit (mt-LSU). Mature N.crassa 74S mitochondrial ribosomes consist of a small (37S) and a large (54S) subunit. The 37S small subunit contains a 16S ribosomal RNA (16S mt-rRNA) and 32 different proteins. The 54S large subunit contains a 23S rRNA (23S mt-rRNA) and 42 different proteins. bL31m bridges the mt-LSU central protuberance and the mt-SSU head.

It localises to the mitochondrion. In terms of biological role, component of the mitochondrial ribosome (mitoribosome), a dedicated translation machinery responsible for the synthesis of mitochondrial genome-encoded proteins, including at least some of the essential transmembrane subunits of the mitochondrial respiratory chain. The mitoribosomes are attached to the mitochondrial inner membrane and translation products are cotranslationally integrated into the membrane. This chain is Large ribosomal subunit protein bL31m (mrpl36), found in Neurospora crassa (strain ATCC 24698 / 74-OR23-1A / CBS 708.71 / DSM 1257 / FGSC 987).